The following is a 246-amino-acid chain: Dehydration-responsive element-binding protein 1H (246 aa).

Residues 1-43 (MDMAGHEVNSSSSSSGAESSSSSSGRQQYKKRPAGRTKFRETR) form a disordered region. The span at 10 to 24 (SSSSSSGAESSSSSS) shows a compositional bias: low complexity. The segment covering 28-37 (QYKKRPAGRT) has biased composition (basic residues). Positions 46-110 (VYRGVRRRGG…GGGAACLNFQ (65 aa)) form a DNA-binding region, AP2/ERF. Residues 155 to 187 (AMDEATSGVSAPPPLANNAGSSETPGPSSIDGT) form a disordered region. A compositionally biased stretch (polar residues) spans 172–181 (NAGSSETPGP).

This sequence belongs to the AP2/ERF transcription factor family. ERF subfamily.

It is found in the nucleus. In terms of biological role, transcriptional activator that binds specifically to the DNA sequence 5'-[AG]CCGAC-3'. Binding to the C-repeat/DRE element mediates high salinity- and dehydration-inducible transcription. In Oryza sativa subsp. indica (Rice), this protein is Dehydration-responsive element-binding protein 1H (DREB1H).